Here is a 192-residue protein sequence, read N- to C-terminus: Xanthine phosphoribosyltransferase (192 aa).

Positions 20 and 27 each coordinate xanthine. Residue 128–132 (ANGDA) participates in 5-phospho-alpha-D-ribose 1-diphosphate binding. Lys-156 contributes to the xanthine binding site.

Belongs to the purine/pyrimidine phosphoribosyltransferase family. Xpt subfamily. Homodimer.

Its subcellular location is the cytoplasm. It catalyses the reaction XMP + diphosphate = xanthine + 5-phospho-alpha-D-ribose 1-diphosphate. The protein operates within purine metabolism; XMP biosynthesis via salvage pathway; XMP from xanthine: step 1/1. In terms of biological role, converts the preformed base xanthine, a product of nucleic acid breakdown, to xanthosine 5'-monophosphate (XMP), so it can be reused for RNA or DNA synthesis. In Staphylococcus aureus (strain MRSA252), this protein is Xanthine phosphoribosyltransferase.